The sequence spans 606 residues: Threonine--tRNA ligase (606 aa).

The tract at residues aspartate 212 to proline 503 is catalytic. Zn(2+)-binding residues include cysteine 304, histidine 355, and histidine 480.

This sequence belongs to the class-II aminoacyl-tRNA synthetase family. Homodimer. It depends on Zn(2+) as a cofactor.

The protein resides in the cytoplasm. It catalyses the reaction tRNA(Thr) + L-threonine + ATP = L-threonyl-tRNA(Thr) + AMP + diphosphate + H(+). Functionally, catalyzes the attachment of threonine to tRNA(Thr) in a two-step reaction: L-threonine is first activated by ATP to form Thr-AMP and then transferred to the acceptor end of tRNA(Thr). Also edits incorrectly charged L-seryl-tRNA(Thr). In Campylobacter curvus (strain 525.92), this protein is Threonine--tRNA ligase.